The chain runs to 329 residues: MTQLFYDTDADLSLLNNKTIAIIGYGSQGHAHALNLKDSGMDVIVGLYKGSKSESKAISDGLQVFSVSEACEKADWIMILLPDEFQKDVYLKEIEPNLKEGKILSFAHGFNIRFGLIKPPSFVDVVMIAPKGPGHTVRWEYQNGQGVPALFAVEQDSSGNARSLAMAYAKGIGGTRAGILETNFKEETETDLFGEQAVLCGGLSELVKSGFETLVEAGYQPELAYFECLHEVKLIVDLMVKGGLSQMRDSISNTAEYGDYVSGKRLINSDTKKEMQKILKDIQDGTFAKNFVEECDKNKPLMTKLREENSKHEIEKVGKGLRSMFSWLK.

Residues 2–182 form the KARI N-terminal Rossmann domain; that stretch reads TQLFYDTDAD…GGTRAGILET (181 aa). NADP(+) contacts are provided by residues 25-28, Ser-51, Ser-53, and 83-86; these read YGSQ and DEFQ. Residue His-108 is part of the active site. An NADP(+)-binding site is contributed by Gly-134. The 146-residue stretch at 183–328 folds into the KARI C-terminal knotted domain; it reads NFKEETETDL…KGLRSMFSWL (146 aa). Residues Asp-191, Glu-195, Glu-227, and Glu-231 each coordinate Mg(2+). Residue Ser-252 participates in substrate binding.

Belongs to the ketol-acid reductoisomerase family. Mg(2+) serves as cofactor.

It catalyses the reaction (2R)-2,3-dihydroxy-3-methylbutanoate + NADP(+) = (2S)-2-acetolactate + NADPH + H(+). The catalysed reaction is (2R,3R)-2,3-dihydroxy-3-methylpentanoate + NADP(+) = (S)-2-ethyl-2-hydroxy-3-oxobutanoate + NADPH + H(+). It functions in the pathway amino-acid biosynthesis; L-isoleucine biosynthesis; L-isoleucine from 2-oxobutanoate: step 2/4. It participates in amino-acid biosynthesis; L-valine biosynthesis; L-valine from pyruvate: step 2/4. In terms of biological role, involved in the biosynthesis of branched-chain amino acids (BCAA). Catalyzes an alkyl-migration followed by a ketol-acid reduction of (S)-2-acetolactate (S2AL) to yield (R)-2,3-dihydroxy-isovalerate. In the isomerase reaction, S2AL is rearranged via a Mg-dependent methyl migration to produce 3-hydroxy-3-methyl-2-ketobutyrate (HMKB). In the reductase reaction, this 2-ketoacid undergoes a metal-dependent reduction by NADPH to yield (R)-2,3-dihydroxy-isovalerate. The sequence is that of Ketol-acid reductoisomerase (NADP(+)) from Prochlorococcus marinus (strain AS9601).